The primary structure comprises 338 residues: MNVYYDRDCDLALIQSKKVTIVGYGSQGHAHACNLKDSGVDVTVALREGSASAVKAQNAGLKVATVAEAVASADVIMILTPDEFQSVLYRDEIEPKLKKGATLAFAHGFAIHYNQIVPRADLDVIMIAPKAPGHTVRSEYVRGGGIPDLIAVFQDASGKAREVALSYASAIGGGRTGIIETTFKDETETDLFGEQAVLCGGAVELVKAGFETLVEAGYAPEMAYFECLHELKLIVDLMFEGGIANMNYSISNNAEYGEYVTGPKVINEQSRAAMKECLNNIQNGEYAKRFILEGMSNYPEMTARRRLNAAHPIEVVGGNLRAMMPWIGKNKIVDKAKN.

The region spanning 1–181 is the KARI N-terminal Rossmann domain; sequence MNVYYDRDCD…GGGRTGIIET (181 aa). NADP(+)-binding positions include 24–27, Arg47, Ser50, Ser52, and 82–85; these read YGSQ and DEFQ. His107 is an active-site residue. Position 133 (Gly133) interacts with NADP(+). Positions 182-327 constitute a KARI C-terminal knotted domain; the sequence is TFKDETETDL…GNLRAMMPWI (146 aa). Residues Asp190, Glu194, Glu226, and Glu230 each coordinate Mg(2+). Position 251 (Ser251) interacts with substrate.

Belongs to the ketol-acid reductoisomerase family. Mg(2+) is required as a cofactor.

The catalysed reaction is (2R)-2,3-dihydroxy-3-methylbutanoate + NADP(+) = (2S)-2-acetolactate + NADPH + H(+). It carries out the reaction (2R,3R)-2,3-dihydroxy-3-methylpentanoate + NADP(+) = (S)-2-ethyl-2-hydroxy-3-oxobutanoate + NADPH + H(+). It functions in the pathway amino-acid biosynthesis; L-isoleucine biosynthesis; L-isoleucine from 2-oxobutanoate: step 2/4. The protein operates within amino-acid biosynthesis; L-valine biosynthesis; L-valine from pyruvate: step 2/4. Involved in the biosynthesis of branched-chain amino acids (BCAA). Catalyzes an alkyl-migration followed by a ketol-acid reduction of (S)-2-acetolactate (S2AL) to yield (R)-2,3-dihydroxy-isovalerate. In the isomerase reaction, S2AL is rearranged via a Mg-dependent methyl migration to produce 3-hydroxy-3-methyl-2-ketobutyrate (HMKB). In the reductase reaction, this 2-ketoacid undergoes a metal-dependent reduction by NADPH to yield (R)-2,3-dihydroxy-isovalerate. The protein is Ketol-acid reductoisomerase (NADP(+)) of Trichlorobacter lovleyi (strain ATCC BAA-1151 / DSM 17278 / SZ) (Geobacter lovleyi).